A 470-amino-acid chain; its full sequence is Light-independent protochlorophyllide reductase subunit N (470 aa).

Positions 24, 49, and 109 each coordinate [4Fe-4S] cluster.

The protein belongs to the BchN/ChlN family. In terms of assembly, protochlorophyllide reductase is composed of three subunits; ChlL, ChlN and ChlB. Forms a heterotetramer of two ChlB and two ChlN subunits. [4Fe-4S] cluster is required as a cofactor.

It catalyses the reaction chlorophyllide a + oxidized 2[4Fe-4S]-[ferredoxin] + 2 ADP + 2 phosphate = protochlorophyllide a + reduced 2[4Fe-4S]-[ferredoxin] + 2 ATP + 2 H2O. The protein operates within porphyrin-containing compound metabolism; chlorophyll biosynthesis (light-independent). Component of the dark-operative protochlorophyllide reductase (DPOR) that uses Mg-ATP and reduced ferredoxin to reduce ring D of protochlorophyllide (Pchlide) to form chlorophyllide a (Chlide). This reaction is light-independent. The NB-protein (ChlN-ChlB) is the catalytic component of the complex. In Acaryochloris marina (strain MBIC 11017), this protein is Light-independent protochlorophyllide reductase subunit N.